The chain runs to 187 residues: Large ribosomal subunit protein eL18B (187 aa).

At Thr-134 the chain carries Phosphothreonine. Ser-136 is subject to Phosphoserine.

This sequence belongs to the eukaryotic ribosomal protein eL18 family. As to quaternary structure, component of the large ribosomal subunit (LSU). Mature yeast ribosomes consist of a small (40S) and a large (60S) subunit. The 40S small subunit contains 1 molecule of ribosomal RNA (18S rRNA) and at least 33 different proteins. The large 60S subunit contains 3 rRNA molecules (25S, 5.8S and 5S rRNA) and at least 46 different proteins. eL18 interacts with NAP1.

Its subcellular location is the cytoplasm. Its function is as follows. Component of the ribosome, a large ribonucleoprotein complex responsible for the synthesis of proteins in the cell. The small ribosomal subunit (SSU) binds messenger RNAs (mRNAs) and translates the encoded message by selecting cognate aminoacyl-transfer RNA (tRNA) molecules. The large subunit (LSU) contains the ribosomal catalytic site termed the peptidyl transferase center (PTC), which catalyzes the formation of peptide bonds, thereby polymerizing the amino acids delivered by tRNAs into a polypeptide chain. The nascent polypeptides leave the ribosome through a tunnel in the LSU and interact with protein factors that function in enzymatic processing, targeting, and the membrane insertion of nascent chains at the exit of the ribosomal tunnel. In Schizosaccharomyces pombe (strain 972 / ATCC 24843) (Fission yeast), this protein is Large ribosomal subunit protein eL18B (rpl1802).